The primary structure comprises 339 residues: D-erythrose-4-phosphate dehydrogenase (339 aa).

NAD(+)-binding positions include 12-13 and Arg81; that span reads RI. Residues 154–156, Arg200, 213–214, and Arg236 contribute to the substrate site; these read SCT and TK. Cys155 (nucleophile) is an active-site residue. Asn318 is an NAD(+) binding site.

The protein belongs to the glyceraldehyde-3-phosphate dehydrogenase family. Epd subfamily. As to quaternary structure, homotetramer.

The protein localises to the cytoplasm. The catalysed reaction is D-erythrose 4-phosphate + NAD(+) + H2O = 4-phospho-D-erythronate + NADH + 2 H(+). It participates in cofactor biosynthesis; pyridoxine 5'-phosphate biosynthesis; pyridoxine 5'-phosphate from D-erythrose 4-phosphate: step 1/5. Functionally, catalyzes the NAD-dependent conversion of D-erythrose 4-phosphate to 4-phosphoerythronate. This Shigella dysenteriae serotype 1 (strain Sd197) protein is D-erythrose-4-phosphate dehydrogenase.